Here is a 331-residue protein sequence, read N- to C-terminus: Anthranilate phosphoribosyltransferase (331 aa).

5-phospho-alpha-D-ribose 1-diphosphate-binding positions include Gly79, 82 to 83 (GD), Thr87, 89 to 92 (NIST), 107 to 115 (KHGNYGATS), and Ala119. Gly79 serves as a coordination point for anthranilate. A Mg(2+)-binding site is contributed by Ser91. Asn110 is an anthranilate binding site. Arg165 contributes to the anthranilate binding site. 2 residues coordinate Mg(2+): Asp223 and Glu224.

It belongs to the anthranilate phosphoribosyltransferase family. As to quaternary structure, homodimer. It depends on Mg(2+) as a cofactor.

It carries out the reaction N-(5-phospho-beta-D-ribosyl)anthranilate + diphosphate = 5-phospho-alpha-D-ribose 1-diphosphate + anthranilate. The protein operates within amino-acid biosynthesis; L-tryptophan biosynthesis; L-tryptophan from chorismate: step 2/5. In terms of biological role, catalyzes the transfer of the phosphoribosyl group of 5-phosphorylribose-1-pyrophosphate (PRPP) to anthranilate to yield N-(5'-phosphoribosyl)-anthranilate (PRA). The protein is Anthranilate phosphoribosyltransferase of Bacteroides fragilis (strain YCH46).